Consider the following 165-residue polypeptide: Putative 4-hydroxy-4-methyl-2-oxoglutarate aldolase (165 aa).

Residues Gly-80–Leu-83 and Arg-102 each bind substrate. Residue Asp-103 participates in a divalent metal cation binding.

Belongs to the class II aldolase/RraA-like family. As to quaternary structure, homotrimer. A divalent metal cation serves as cofactor.

It catalyses the reaction 4-hydroxy-4-methyl-2-oxoglutarate = 2 pyruvate. The enzyme catalyses oxaloacetate + H(+) = pyruvate + CO2. Functionally, catalyzes the aldol cleavage of 4-hydroxy-4-methyl-2-oxoglutarate (HMG) into 2 molecules of pyruvate. Also contains a secondary oxaloacetate (OAA) decarboxylase activity due to the common pyruvate enolate transition state formed following C-C bond cleavage in the retro-aldol and decarboxylation reactions. In Burkholderia mallei (strain NCTC 10247), this protein is Putative 4-hydroxy-4-methyl-2-oxoglutarate aldolase.